The chain runs to 429 residues: Enolase (429 aa).

Glutamine 162 provides a ligand contact to (2R)-2-phosphoglycerate. Glutamate 204 functions as the Proton donor in the catalytic mechanism. Residues aspartate 241, glutamate 283, and aspartate 310 each coordinate Mg(2+). (2R)-2-phosphoglycerate contacts are provided by lysine 335, arginine 364, serine 365, and lysine 386. Catalysis depends on lysine 335, which acts as the Proton acceptor.

Belongs to the enolase family. It depends on Mg(2+) as a cofactor.

The protein resides in the cytoplasm. It localises to the secreted. Its subcellular location is the cell surface. The enzyme catalyses (2R)-2-phosphoglycerate = phosphoenolpyruvate + H2O. Its pathway is carbohydrate degradation; glycolysis; pyruvate from D-glyceraldehyde 3-phosphate: step 4/5. Its function is as follows. Catalyzes the reversible conversion of 2-phosphoglycerate (2-PG) into phosphoenolpyruvate (PEP). It is essential for the degradation of carbohydrates via glycolysis. This is Enolase from Mycolicibacterium vanbaalenii (strain DSM 7251 / JCM 13017 / BCRC 16820 / KCTC 9966 / NRRL B-24157 / PYR-1) (Mycobacterium vanbaalenii).